We begin with the raw amino-acid sequence, 615 residues long: Medium-chain acyl-CoA ligase ACSF2, mitochondrial (615 aa).

Residues 1 to 41 (MAVYVGMLRLGRLCAGSSGVLGARVALSRSWQEARLQGVRF) constitute a mitochondrion transit peptide. N6-acetyllysine is present on K179. Position 182 is an N6-acetyllysine; alternate (K182). An N6-succinyllysine; alternate modification is found at K182. An ATP-binding site is contributed by 263-271 (TSGTTGSPK). N6-acetyllysine occurs at positions 340 and 398. N6-succinyllysine is present on K478. Positions 493 and 508 each coordinate ATP. N6-acetyllysine is present on K510. K544 and K570 each carry N6-acetyllysine; alternate. N6-succinyllysine; alternate is present on residues K544 and K570. K599 provides a ligand contact to ATP. Residue K599 is modified to N6-succinyllysine.

This sequence belongs to the ATP-dependent AMP-binding enzyme family.

The protein resides in the mitochondrion. The catalysed reaction is a medium-chain fatty acid + ATP + CoA = a medium-chain fatty acyl-CoA + AMP + diphosphate. It catalyses the reaction octanoate + ATP + CoA = octanoyl-CoA + AMP + diphosphate. Functionally, acyl-CoA synthases catalyze the initial reaction in fatty acid metabolism, by forming a thioester with CoA. Has some preference toward medium-chain substrates. Plays a role in adipocyte differentiation. The sequence is that of Medium-chain acyl-CoA ligase ACSF2, mitochondrial from Pongo abelii (Sumatran orangutan).